A 450-amino-acid chain; its full sequence is Vimentin beta (450 aa).

A head region spans residues 1 to 81 (MSSRTSTSSY…FGLADAINTE (81 aa)). Positions 24–38 (STYSSRQYSSPGRTT) are enriched in polar residues. The segment at 24–56 (STYSSRQYSSPGRTTSRVSYSSASSTSPSLYMS) is disordered. Positions 39–56 (SRVSYSSASSTSPSLYMS) are enriched in low complexity. Positions 82 to 117 (FKANRTNEKAEMQHVNDRFASYIEEVRFLEQQNKIL) are coil 1A. The IF rod domain maps to 89–397 (EKAEMQHVND…NLLEGEEYRI (309 aa)). Residues 118–139 (TAELEQMRGKGSSRVGDLYEDE) form a linker 1 region. The tract at residues 140–231 (MRELRRQVDQ…KLHDEELAEL (92 aa)) is coil 1B. The interval 232-254 (QMQIQERHVQIDMEVAKPDLTAA) is linker 12. The tract at residues 255 to 393 (LRDVRQQYET…ATYRNLLEGE (139 aa)) is coil 2. The tail stretch occupies residues 394–450 (EYRITTPFPNLSSLSLRESMKEIRPAMDSLSKKVVIKTIETRDGHIINQSTQKDNLE).

This sequence belongs to the intermediate filament family. As to quaternary structure, homomer. One of the most prominent phosphoproteins in various cells of mesenchymal origin. Phosphorylation is enhanced during cell division, at which time vimentin filaments are significantly reorganized. As to expression, expressed in low amounts in retina, optic nerve, brain, and spinal cord and in very high amounts in eye lens.

Its function is as follows. Vimentins are class-III intermediate filaments found in various non-epithelial cells, especially mesenchymal cells. Vimentin is attached to the nucleus, endoplasmic reticulum, and mitochondria, either laterally or terminally. This is Vimentin beta from Carassius auratus (Goldfish).